Here is a 189-residue protein sequence, read N- to C-terminus: Elongation factor P (189 aa).

Belongs to the elongation factor P family.

The protein resides in the cytoplasm. It functions in the pathway protein biosynthesis; polypeptide chain elongation. Involved in peptide bond synthesis. Stimulates efficient translation and peptide-bond synthesis on native or reconstituted 70S ribosomes in vitro. Probably functions indirectly by altering the affinity of the ribosome for aminoacyl-tRNA, thus increasing their reactivity as acceptors for peptidyl transferase. The polypeptide is Elongation factor P (Sinorhizobium medicae (strain WSM419) (Ensifer medicae)).